A 486-amino-acid chain; its full sequence is Galactose-1-phosphate uridylyltransferase (486 aa).

This sequence belongs to the galactose-1-phosphate uridylyltransferase type 2 family.

The protein resides in the cytoplasm. The enzyme catalyses alpha-D-galactose 1-phosphate + UDP-alpha-D-glucose = alpha-D-glucose 1-phosphate + UDP-alpha-D-galactose. It participates in carbohydrate metabolism; galactose metabolism. This chain is Galactose-1-phosphate uridylyltransferase, found in Lacticaseibacillus paracasei (strain ATCC 334 / BCRC 17002 / CCUG 31169 / CIP 107868 / KCTC 3260 / NRRL B-441) (Lactobacillus paracasei).